Here is a 278-residue protein sequence, read N- to C-terminus: Phosphatidylglycerol--prolipoprotein diacylglyceryl transferase (278 aa).

3 helical membrane passes run leucine 13–valine 33, valine 50–valine 70, and asparagine 89–threonine 109. A 1,2-diacyl-sn-glycero-3-phospho-(1'-sn-glycerol) is bound at residue arginine 135. Transmembrane regions (helical) follow at residues glutamine 175 to leucine 195, glycine 205 to leucine 225, and isoleucine 236 to valine 256.

The protein belongs to the Lgt family.

Its subcellular location is the cell membrane. The enzyme catalyses L-cysteinyl-[prolipoprotein] + a 1,2-diacyl-sn-glycero-3-phospho-(1'-sn-glycerol) = an S-1,2-diacyl-sn-glyceryl-L-cysteinyl-[prolipoprotein] + sn-glycerol 1-phosphate + H(+). It functions in the pathway protein modification; lipoprotein biosynthesis (diacylglyceryl transfer). In terms of biological role, catalyzes the transfer of the diacylglyceryl group from phosphatidylglycerol to the sulfhydryl group of the N-terminal cysteine of a prolipoprotein, the first step in the formation of mature lipoproteins. This is Phosphatidylglycerol--prolipoprotein diacylglyceryl transferase from Enterococcus faecalis (strain ATCC 700802 / V583).